The primary structure comprises 394 residues: Phosphopentomutase (394 aa).

Positions 13, 286, 291, 327, 328, and 339 each coordinate Mn(2+).

This sequence belongs to the phosphopentomutase family. Mn(2+) serves as cofactor.

It localises to the cytoplasm. It carries out the reaction 2-deoxy-alpha-D-ribose 1-phosphate = 2-deoxy-D-ribose 5-phosphate. The enzyme catalyses alpha-D-ribose 1-phosphate = D-ribose 5-phosphate. It participates in carbohydrate degradation; 2-deoxy-D-ribose 1-phosphate degradation; D-glyceraldehyde 3-phosphate and acetaldehyde from 2-deoxy-alpha-D-ribose 1-phosphate: step 1/2. In terms of biological role, isomerase that catalyzes the conversion of deoxy-ribose 1-phosphate (dRib-1-P) and ribose 1-phosphate (Rib-1-P) to deoxy-ribose 5-phosphate (dRib-5-P) and ribose 5-phosphate (Rib-5-P), respectively. In Bacillus mycoides (strain KBAB4) (Bacillus weihenstephanensis), this protein is Phosphopentomutase.